A 456-amino-acid polypeptide reads, in one-letter code: Exodeoxyribonuclease 7 large subunit (456 aa).

It belongs to the XseA family. As to quaternary structure, heterooligomer composed of large and small subunits.

It localises to the cytoplasm. The enzyme catalyses Exonucleolytic cleavage in either 5'- to 3'- or 3'- to 5'-direction to yield nucleoside 5'-phosphates.. In terms of biological role, bidirectionally degrades single-stranded DNA into large acid-insoluble oligonucleotides, which are then degraded further into small acid-soluble oligonucleotides. In Escherichia coli O157:H7, this protein is Exodeoxyribonuclease 7 large subunit.